The sequence spans 93 residues: UPF0223 protein LACR_0546 (93 aa).

This sequence belongs to the UPF0223 family.

This is UPF0223 protein LACR_0546 from Lactococcus lactis subsp. cremoris (strain SK11).